Here is a 1124-residue protein sequence, read N- to C-terminus: Ras-associating and dilute domain-containing protein (1124 aa).

The region spanning 61–164 (APGVLKIFGD…RRFELRRRAE (104 aa)) is the Ras-associating domain. Residues 226-253 (YYSTLPGPIRTRSARDSEIRKERDGGGV) are disordered. The segment covering 238-252 (SARDSEIRKERDGGG) has biased composition (basic and acidic residues). In terms of domain architecture, FHA spans 284 to 342 (HTVGQETASARPNICLSSPDVLPLHCRIRRAAQRRSSSDQRLLLEPVAHGNVLVNFMRI). One can recognise a Dilute domain in the interval 516-809 (ASLSLLSISD…VDLLESFENH (294 aa)). 2 disordered regions span residues 850 to 942 (THPS…TPPN) and 960 to 982 (PEHASQEHTHTHSHTKTNGCMRS). A compositionally biased stretch (pro residues) spans 866-876 (PPQPHSSPHPA). A compositionally biased stretch (basic and acidic residues) spans 903-912 (AEDRTRDKPT). Polar residues predominate over residues 926–937 (ANQSQATDSSCI). Residues 960–969 (PEHASQEHTH) are compositionally biased toward basic and acidic residues. The region spanning 1027 to 1112 (VVDLDKGPYG…RLRFLVAKSD (86 aa)) is the PDZ domain.

It belongs to the RADIL family. In terms of assembly, interacts with RAP1A; in a GTP-dependent manner. In terms of tissue distribution, ubiquitously expressed and enriched in the anterior part of the embryos.

In terms of biological role, downstream effector of Rap required for cell adhesion and migration of neural crest precursors during development. This Danio rerio (Zebrafish) protein is Ras-associating and dilute domain-containing protein (radil).